Here is a 716-residue protein sequence, read N- to C-terminus: MPLNFPLRIRFFAHSLSGTHLSYNTSSSVPLLFRIFSSGLNHFEFGSRINFSTRPNRDQPEFERRIRDGGEIRASKSLIEDEEELSNWVSGFRTGSSRGILKSDDEDEEDRSRGRNQEKRGIRNQVDSFRNKRYGGDRERGFNSRIQGKSSEASFRGRKETSFSRDREDEKGLRKREDLRLEDESSDEDVKSLVMGDIGDLLSEDDEEEDQDYDFLKKKAVSAFGFDKENVIEADKTRNANDSYLTKTRFDHYPLSPLSLKAIKDAGYETMTVVQEATLPIILKGKDVLAKAKTGTGKTVAFLLPSIEVVVKSPPTSPDNKRPPILALVICPTRELANQAATEANTLLKYHPSIGVQVVIGGTRLGLEQKRMQTNPCQILVATPGRLKDHIENTPGFATRLKGVKVLVLDEADHLLDMGFRKDIERIISAVPKERQTFLFSATVPEEVRQICLVALRRDHEFVNCVHEGTIETHQQVRQMHMIASLDRHFSLLYTLLREHIMGNVDYKVIVFCTTAMVTKLVADLLGELNLNVREIHSRKPQSYRTRVSNEFRKSKGLILVTSDVSARGVDYPDVTLVLQVGLPKDREQYIHRLGRTGRKGKEGEGILLLAPWEEYFLSSLKDLPITKSPLPSIDPETVKKVQKALCHVEMRNKEAAYQAWLGYYNSQKMIGRDKDRLVELANEFSRSMGLDNPPAIPKLILGKMGLKNVPGLRAK.

Positions 99–188 are disordered; it reads GILKSDDEDE…LRLEDESSDE (90 aa). The span at 110–121 shows a compositional bias: basic and acidic residues; it reads DRSRGRNQEKRG. The segment covering 144–153 has biased composition (polar residues); it reads SRIQGKSSEA. Positions 155–188 are enriched in basic and acidic residues; that stretch reads FRGRKETSFSRDREDEKGLRKREDLRLEDESSDE. Positions 248 to 276 match the Q motif motif; that stretch reads TRFDHYPLSPLSLKAIKDAGYETMTVVQE. In terms of domain architecture, Helicase ATP-binding spans 279–462; sequence LPIILKGKDV…LVALRRDHEF (184 aa). 292-299 provides a ligand contact to ATP; the sequence is AKTGTGKT. Residues 410-413 carry the DEAD box motif; the sequence is DEAD. Residues 497-643 form the Helicase C-terminal domain; the sequence is LREHIMGNVD…IDPETVKKVQ (147 aa).

It belongs to the DEAD box helicase family.

The enzyme catalyses ATP + H2O = ADP + phosphate + H(+). The protein is DEAD-box ATP-dependent RNA helicase 31 (RH31) of Arabidopsis thaliana (Mouse-ear cress).